The sequence spans 134 residues: Probable histone H2A.3 (134 aa).

It belongs to the histone H2A family. In terms of assembly, the nucleosome is a histone octamer containing two molecules each of H2A, H2B, H3 and H4 assembled in one H3-H4 heterotetramer and two H2A-H2B heterodimers. The octamer wraps approximately 147 bp of DNA.

Its subcellular location is the nucleus. It localises to the chromosome. Core component of nucleosome. Nucleosomes wrap and compact DNA into chromatin, limiting DNA accessibility to the cellular machineries which require DNA as a template. Histones thereby play a central role in transcription regulation, DNA repair, DNA replication and chromosomal stability. DNA accessibility is regulated via a complex set of post-translational modifications of histones, also called histone code, and nucleosome remodeling. This Oryza sativa subsp. indica (Rice) protein is Probable histone H2A.3.